Reading from the N-terminus, the 1330-residue chain is Sister chromatid cohesion protein PDS5 homolog A (1330 aa).

The HEAT repeat unit spans residues 387–423 (SLVNDQLLGFVRERTLDKRWRVRKEAMMGLAQLYKKY). The interval 1138–1330 (VNKPLSATGR…AAQRQIDLQR (193 aa)) is disordered. Residues 1160–1171 (SNISVNSELSSS) are compositionally biased toward low complexity. The span at 1216-1225 (SDQATQGNST) shows a compositional bias: polar residues.

Belongs to the PDS5 family. In terms of assembly, interacts with the cohesin complex. Binds chromatin in a cohesin-dependent manner.

It is found in the nucleus. Its function is as follows. May regulate sister chromatid cohesion during mitosis and couple it to DNA replication. This chain is Sister chromatid cohesion protein PDS5 homolog A, found in Gallus gallus (Chicken).